The following is a 105-amino-acid chain: Large ribosomal subunit protein uL23 (105 aa).

It belongs to the universal ribosomal protein uL23 family. Part of the 50S ribosomal subunit. Contacts protein L29, and trigger factor when it is bound to the ribosome.

Its function is as follows. One of the early assembly proteins it binds 23S rRNA. One of the proteins that surrounds the polypeptide exit tunnel on the outside of the ribosome. Forms the main docking site for trigger factor binding to the ribosome. The protein is Large ribosomal subunit protein uL23 of Janthinobacterium sp. (strain Marseille) (Minibacterium massiliensis).